Reading from the N-terminus, the 85-residue chain is Protein Vpu (85 aa).

Residues methionine 1–leucine 7 lie on the Extracellular side of the membrane. A helical membrane pass occupies residues alanine 8–arginine 28. At lysine 29–proline 85 the chain is on the cytoplasmic side.

This sequence belongs to the HIV-1 VPU protein family. Homopentamer. Interacts with host CD4 and BRTC; these interactions induce proteasomal degradation of CD4. Interacts with host BST2; this interaction leads to the degradation of host BST2. Interacts with host FBXW11. Interacts with host AP1M1; this interaction plays a role in the mistrafficking and subsequent degradation of host BST2. Interacts with host RANBP2; this interaction allows Vpu to down-regulate host BLM sumoylation. Phosphorylated by host CK2. This phosphorylation is necessary for interaction with human BTRC and degradation of CD4.

It localises to the host membrane. With respect to regulation, ion channel activity is inhibited by hexamethylene amiloride in vitro. Enhances virion budding by targeting host CD4 and Tetherin/BST2 to proteasome degradation. Degradation of CD4 prevents any unwanted premature interactions between viral Env and its host receptor CD4 in the endoplasmic reticulum. Degradation of antiretroviral protein Tetherin/BST2 is important for virion budding, as BST2 tethers new viral particles to the host cell membrane. Mechanistically, Vpu bridges either CD4 or BST2 to BTRC, a substrate recognition subunit of the Skp1/Cullin/F-box protein E3 ubiquitin ligase, induces their ubiquitination and subsequent proteasomal degradation. The alteration of the E3 ligase specificity by Vpu seems to promote the degradation of host IKBKB, leading to NF-kappa-B down-regulation and subsequent apoptosis. Acts as a viroporin that forms an oligomeric ion channel in membranes. Modulates the host DNA repair mechanisms to promote degradation of nuclear viral cDNA in cells that are already productively infected in order to suppress immune sensing and proviral hyper-integration (superinfection). Manipulates PML-NBs and modulates SUMOylation of host BLM protein thereby enhancing its DNA-end processing activity toward viral unintegrated linear DNA. Also inhibits RAD52-mediated homologous repair of viral cDNA, preventing the generation of dead-end circular forms of single copies of the long terminal repeat and permitting sustained nucleolytic attack. The polypeptide is Protein Vpu (Human immunodeficiency virus type 1 group O (isolate ANT70) (HIV-1)).